A 196-amino-acid chain; its full sequence is Superantigen-like protein 11 (196 aa).

Residues 65-167 form a sialyl Lewis X-binding region; sequence LDVFVVREGS…RVTMKNGDFY (103 aa).

This sequence belongs to the staphylococcal/streptococcal toxin family. In terms of assembly, homodimer (via its C-terminal domain). Interacts with host FCAR and SELPLG (via sialyl Lewis X).

It localises to the secreted. Its function is as follows. Secreted protein that plays a role in the inhibition of host immune system. Targets myeloid cells such as monocytes or granulocytes through binding with sialyllactosamine-containing glycoproteins. Prevents initial rolling of neutrophils toward the site of infection by interacting with host SELPLG. Disrupts neutrophil motility by induction of cell adhesion via interacting with glycans but independently of SELPLG. The polypeptide is Superantigen-like protein 11 (Staphylococcus aureus).